Here is a 548-residue protein sequence, read N- to C-terminus: Chaperonin GroEL (548 aa).

Residues 30 to 33 (TLGP), Lys51, 87 to 91 (DGTTT), Gly415, 479 to 481 (NAA), and Asp495 contribute to the ATP site.

It belongs to the chaperonin (HSP60) family. Forms a cylinder of 14 subunits composed of two heptameric rings stacked back-to-back. Interacts with the co-chaperonin GroES.

Its subcellular location is the cytoplasm. The enzyme catalyses ATP + H2O + a folded polypeptide = ADP + phosphate + an unfolded polypeptide.. Its function is as follows. Together with its co-chaperonin GroES, plays an essential role in assisting protein folding. The GroEL-GroES system forms a nano-cage that allows encapsulation of the non-native substrate proteins and provides a physical environment optimized to promote and accelerate protein folding. In Klebsiella aerogenes (strain ATCC 13048 / DSM 30053 / CCUG 1429 / JCM 1235 / KCTC 2190 / NBRC 13534 / NCIMB 10102 / NCTC 10006 / CDC 819-56) (Enterobacter aerogenes), this protein is Chaperonin GroEL.